Reading from the N-terminus, the 332-residue chain is mRNA-decapping enzyme 1 (332 aa).

The span at 141-173 shows a compositional bias: low complexity; the sequence is ARAAKAASEAPQASVPAPTQAPAAPAQAPQMAP. Residues 141 to 175 form a disordered region; that stretch reads ARAAKAASEAPQASVPAPTQAPAAPAQAPQMAPQA.

The protein belongs to the DCP1 family. May be a component of the decapping complex composed of dcap-1 and dcap-2. As to expression, expressed in neurons including touch receptor neurons and motor neurons.

It localises to the cytoplasm. The protein localises to the cytoplasmic granule. Functionally, component of the decapping complex necessary for the degradation of mRNAs, both in normal mRNA turnover and in nonsense-mediated mRNA decay. In contrast to orthologs, does not possess decapping activity and does not remove the 7-methyl guanine cap structure from mRNA molecules. In the nervous system, negatively regulates the expression of insulin-like peptide ins-7, which in turn promotes longevity. This may in part be through promoting the activity of daf-16 in distal tissues. Required for the developmental axon guidance and regrowth of PLM touch receptor neurons. In ADL sensory neurons, plays a role in ciliary shape formation. Acts in neurons to promote larval survival at high temperatures by negatively regulating lin-14 expression. The chain is mRNA-decapping enzyme 1 from Caenorhabditis elegans.